Reading from the N-terminus, the 82-residue chain is Small ribosomal subunit protein eS27A (82 aa).

The C4-type zinc-finger motif lies at 37–59 (CPGCLNITTVFSHAQTAVTCESC). Position 40 is an S-methylcysteine (C40).

This sequence belongs to the eukaryotic ribosomal protein eS27 family. In terms of assembly, component of the small ribosomal subunit (SSU). Mature yeast ribosomes consist of a small (40S) and a large (60S) subunit. The 40S small subunit contains 1 molecule of ribosomal RNA (18S rRNA) and 33 different proteins (encoded by 57 genes). The large 60S subunit contains 3 rRNA molecules (25S, 5.8S and 5S rRNA) and 46 different proteins (encoded by 81 genes). It depends on Zn(2+) as a cofactor. In terms of processing, the N-terminus is not modified.

The protein localises to the cytoplasm. In terms of biological role, component of the ribosome, a large ribonucleoprotein complex responsible for the synthesis of proteins in the cell. The small ribosomal subunit (SSU) binds messenger RNAs (mRNAs) and translates the encoded message by selecting cognate aminoacyl-transfer RNA (tRNA) molecules. The large subunit (LSU) contains the ribosomal catalytic site termed the peptidyl transferase center (PTC), which catalyzes the formation of peptide bonds, thereby polymerizing the amino acids delivered by tRNAs into a polypeptide chain. The nascent polypeptides leave the ribosome through a tunnel in the LSU and interact with protein factors that function in enzymatic processing, targeting, and the membrane insertion of nascent chains at the exit of the ribosomal tunnel. This Saccharomyces cerevisiae (strain ATCC 204508 / S288c) (Baker's yeast) protein is Small ribosomal subunit protein eS27A.